The primary structure comprises 81 residues: Sulfur carrier protein TusA (81 aa).

Cysteine 19 acts as the Cysteine persulfide intermediate in catalysis.

It belongs to the sulfur carrier protein TusA family. As to quaternary structure, interacts with IscS.

It localises to the cytoplasm. Its pathway is tRNA modification. Its function is as follows. Sulfur carrier protein involved in sulfur trafficking in the cell. Part of a sulfur-relay system required for 2-thiolation during synthesis of 2-thiouridine of the modified wobble base 5-methylaminomethyl-2-thiouridine (mnm(5)s(2)U) in tRNA. Interacts with IscS and stimulates its cysteine desulfurase activity. Accepts an activated sulfur from IscS, which is then transferred to TusD, and thus determines the direction of sulfur flow from IscS to 2-thiouridine formation. Also appears to be involved in sulfur transfer for the biosynthesis of molybdopterin. The protein is Sulfur carrier protein TusA of Enterobacter sp. (strain 638).